Reading from the N-terminus, the 149-residue chain is MTVFKEILDNIANIKNVESYQIENIHLTSDDVLKRVIIISSDQNVEYGIRLEEDKKLMDGDILYKDDYKLVVIRLELSDVLIITAHTIGEMAKIAHNLGNRHMPAQFTETQMIVPYDYLVEEYLQDNKALYERKKIKLKEAFKHCSDAK.

Belongs to the UreE family.

It is found in the cytoplasm. Functionally, involved in urease metallocenter assembly. Binds nickel. Probably functions as a nickel donor during metallocenter assembly. This Ureaplasma parvum serovar 3 (strain ATCC 700970) protein is Urease accessory protein UreE.